A 573-amino-acid polypeptide reads, in one-letter code: Sulfate adenylyltransferase (573 aa).

The interval 1–169 (MANSPHGGVL…LEAVNRLQHY (169 aa)) is N-terminal. A catalytic region spans residues 170–394 (DFVELRYTPS…LRESHPPRSQ (225 aa)). Gln-197 contacts sulfate. ATP is bound by residues 197 to 200 (QTRN) and 291 to 294 (GRDH). Active-site residues include Thr-198, Arg-199, and Asn-200. Arg-199 lines the sulfate pocket. Position 295 (Ala-295) interacts with sulfate. Met-333 contacts ATP. An allosteric regulation domain; adenylyl-sulfate kinase-like region spans residues 395-573 (QGFTIFLTGY…LESQGLLDRF (179 aa)). Residues 434–437 (ETVR), Arg-451, 477–478 (IA), and Arg-515 contribute to the 3'-phosphoadenylyl sulfate site.

It in the N-terminal section; belongs to the sulfate adenylyltransferase family. The protein in the C-terminal section; belongs to the APS kinase family. Homohexamer. Dimer of trimers.

Its subcellular location is the cytoplasm. The enzyme catalyses sulfate + ATP + H(+) = adenosine 5'-phosphosulfate + diphosphate. The protein operates within sulfur metabolism; hydrogen sulfide biosynthesis; sulfite from sulfate: step 1/3. Its activity is regulated as follows. Allosterically inhibited by 3'-phosphoadenosine 5'-phosphosulfate (PAPS). Its function is as follows. Catalyzes the first intracellular reaction of sulfate assimilation, forming adenosine-5'-phosphosulfate (APS) from inorganic sulfate and ATP. Plays an important role in sulfate activation as a component of the biosynthesis pathway of sulfur-containing amino acids. This is Sulfate adenylyltransferase from Chaetomium globosum (strain ATCC 6205 / CBS 148.51 / DSM 1962 / NBRC 6347 / NRRL 1970) (Soil fungus).